Consider the following 562-residue polypeptide: Wee1-like protein kinase 2 (562 aa).

2 disordered regions span residues Met1–Val86 and Tyr161–Ser181. Residues His35 to Ala48 are compositionally biased toward polar residues. A Protein kinase domain is found at Phe217–Val491. Residues Ile223–Val231 and Lys246 each bind ATP. The active-site Proton acceptor is Asp344. Residues Asn349 and Asp381 each contribute to the Mg(2+) site. Residues Ala494 to Leu520 adopt a coiled-coil conformation.

This sequence belongs to the protein kinase superfamily. Ser/Thr protein kinase family. WEE1 subfamily.

It is found in the nucleus. It catalyses the reaction L-tyrosyl-[protein] + ATP = O-phospho-L-tyrosyl-[protein] + ADP + H(+). In terms of biological role, oocyte-specific protein tyrosine kinase that phosphorylates and inhibits cdk1 and acts as a regulator of meiosis. Required to maintain meiotic arrest in oocytes by phosphorylating cdk1 at 'Tyr-15', leading to inhibit cdk1 activity and prevent meiotic reentry. The chain is Wee1-like protein kinase 2 (wee2) from Xenopus tropicalis (Western clawed frog).